The chain runs to 264 residues: S-adenosylmethionine decarboxylase proenzyme (264 aa).

Ser112 (schiff-base intermediate with substrate; via pyruvic acid) is an active-site residue. Ser112 carries the post-translational modification Pyruvic acid (Ser); by autocatalysis. His117 (proton acceptor; for processing activity) is an active-site residue. Cys140 functions as the Proton donor; for catalytic activity in the catalytic mechanism.

It belongs to the prokaryotic AdoMetDC family. Type 2 subfamily. Heterooctamer of four alpha and four beta chains arranged as a tetramer of alpha/beta heterodimers. Requires pyruvate as cofactor. Post-translationally, is synthesized initially as an inactive proenzyme. Formation of the active enzyme involves a self-maturation process in which the active site pyruvoyl group is generated from an internal serine residue via an autocatalytic post-translational modification. Two non-identical subunits are generated from the proenzyme in this reaction, and the pyruvate is formed at the N-terminus of the alpha chain, which is derived from the carboxyl end of the proenzyme. The post-translation cleavage follows an unusual pathway, termed non-hydrolytic serinolysis, in which the side chain hydroxyl group of the serine supplies its oxygen atom to form the C-terminus of the beta chain, while the remainder of the serine residue undergoes an oxidative deamination to produce ammonia and the pyruvoyl group blocking the N-terminus of the alpha chain.

It catalyses the reaction S-adenosyl-L-methionine + H(+) = S-adenosyl 3-(methylsulfanyl)propylamine + CO2. The protein operates within amine and polyamine biosynthesis; S-adenosylmethioninamine biosynthesis; S-adenosylmethioninamine from S-adenosyl-L-methionine: step 1/1. Its function is as follows. Catalyzes the decarboxylation of S-adenosylmethionine to S-adenosylmethioninamine (dcAdoMet), the propylamine donor required for the synthesis of the polyamines spermine and spermidine from the diamine putrescine. This is S-adenosylmethionine decarboxylase proenzyme from Pectobacterium atrosepticum (strain SCRI 1043 / ATCC BAA-672) (Erwinia carotovora subsp. atroseptica).